The following is a 718-amino-acid chain: Nucleolar protein 11 (718 aa).

At K346 the chain carries N6-methyllysine.

In terms of assembly, interacts with UTP4. Interacts with FBL/fibrillarin in a transcription-dependent manner. May associate with the proposed t-UTP subcomplex of the SSU processome containing at least UTP4, WDR43, HEATR1, UTP15, WDR75.

The protein localises to the nucleus. It is found in the nucleolus. In terms of biological role, ribosome biogenesis factor. May be required for both optimal rDNA transcription and small subunit (SSU) pre-rRNA processing at sites A', A0, 1 and 2b. The sequence is that of Nucleolar protein 11 (NOL11) from Pongo abelii (Sumatran orangutan).